Reading from the N-terminus, the 483-residue chain is Proline--tRNA ligase (483 aa).

This sequence belongs to the class-II aminoacyl-tRNA synthetase family. ProS type 3 subfamily. Homodimer.

The protein localises to the cytoplasm. It catalyses the reaction tRNA(Pro) + L-proline + ATP = L-prolyl-tRNA(Pro) + AMP + diphosphate. In terms of biological role, catalyzes the attachment of proline to tRNA(Pro) in a two-step reaction: proline is first activated by ATP to form Pro-AMP and then transferred to the acceptor end of tRNA(Pro). This is Proline--tRNA ligase from Sulfurisphaera tokodaii (strain DSM 16993 / JCM 10545 / NBRC 100140 / 7) (Sulfolobus tokodaii).